The chain runs to 1406 residues: DNA-directed RNA polymerase subunit beta' (1406 aa).

Zn(2+)-binding residues include cysteine 72, cysteine 74, cysteine 87, and cysteine 90. Residues aspartate 462, aspartate 464, and aspartate 466 each coordinate Mg(2+). The Zn(2+) site is built by cysteine 816, cysteine 889, cysteine 896, and cysteine 899.

The protein belongs to the RNA polymerase beta' chain family. As to quaternary structure, the RNAP catalytic core consists of 2 alpha, 1 beta, 1 beta' and 1 omega subunit. When a sigma factor is associated with the core the holoenzyme is formed, which can initiate transcription. Mg(2+) is required as a cofactor. It depends on Zn(2+) as a cofactor.

It carries out the reaction RNA(n) + a ribonucleoside 5'-triphosphate = RNA(n+1) + diphosphate. In terms of biological role, DNA-dependent RNA polymerase catalyzes the transcription of DNA into RNA using the four ribonucleoside triphosphates as substrates. The protein is DNA-directed RNA polymerase subunit beta' of Psychrobacter sp. (strain PRwf-1).